We begin with the raw amino-acid sequence, 266 residues long: 3-methyl-2-oxobutanoate hydroxymethyltransferase (266 aa).

Residues Asp-45 and Asp-84 each contribute to the Mg(2+) site. 3-methyl-2-oxobutanoate contacts are provided by residues 45–46 (DS), Asp-84, and Lys-112. Residue Glu-114 coordinates Mg(2+). Glu-181 acts as the Proton acceptor in catalysis.

Belongs to the PanB family. As to quaternary structure, homodecamer; pentamer of dimers. Mg(2+) serves as cofactor.

The protein resides in the cytoplasm. The catalysed reaction is 3-methyl-2-oxobutanoate + (6R)-5,10-methylene-5,6,7,8-tetrahydrofolate + H2O = 2-dehydropantoate + (6S)-5,6,7,8-tetrahydrofolate. It participates in cofactor biosynthesis; (R)-pantothenate biosynthesis; (R)-pantoate from 3-methyl-2-oxobutanoate: step 1/2. Functionally, catalyzes the reversible reaction in which hydroxymethyl group from 5,10-methylenetetrahydrofolate is transferred onto alpha-ketoisovalerate to form ketopantoate. The sequence is that of 3-methyl-2-oxobutanoate hydroxymethyltransferase from Stutzerimonas stutzeri (strain A1501) (Pseudomonas stutzeri).